The following is a 332-amino-acid chain: Ketol-acid reductoisomerase (NADP(+)) (332 aa).

Positions 2–182 (AKIYHDLEVS…GATRAGVLET (181 aa)) constitute a KARI N-terminal Rossmann domain. Residues 25–28 (YGSQ), Arg-48, Ser-53, and 83–86 (DTEQ) each bind NADP(+). Residue His-108 is part of the active site. Gly-134 contributes to the NADP(+) binding site. The 146-residue stretch at 183–328 (TFKEETETDL…KVIREMMPWL (146 aa)) folds into the KARI C-terminal knotted domain. Mg(2+) is bound by residues Asp-191, Glu-195, Glu-227, and Glu-231. Ser-252 contacts substrate.

This sequence belongs to the ketol-acid reductoisomerase family. Mg(2+) serves as cofactor.

It carries out the reaction (2R)-2,3-dihydroxy-3-methylbutanoate + NADP(+) = (2S)-2-acetolactate + NADPH + H(+). It catalyses the reaction (2R,3R)-2,3-dihydroxy-3-methylpentanoate + NADP(+) = (S)-2-ethyl-2-hydroxy-3-oxobutanoate + NADPH + H(+). The protein operates within amino-acid biosynthesis; L-isoleucine biosynthesis; L-isoleucine from 2-oxobutanoate: step 2/4. It participates in amino-acid biosynthesis; L-valine biosynthesis; L-valine from pyruvate: step 2/4. Functionally, involved in the biosynthesis of branched-chain amino acids (BCAA). Catalyzes an alkyl-migration followed by a ketol-acid reduction of (S)-2-acetolactate (S2AL) to yield (R)-2,3-dihydroxy-isovalerate. In the isomerase reaction, S2AL is rearranged via a Mg-dependent methyl migration to produce 3-hydroxy-3-methyl-2-ketobutyrate (HMKB). In the reductase reaction, this 2-ketoacid undergoes a metal-dependent reduction by NADPH to yield (R)-2,3-dihydroxy-isovalerate. This chain is Ketol-acid reductoisomerase (NADP(+)), found in Dictyoglomus thermophilum (strain ATCC 35947 / DSM 3960 / H-6-12).